A 367-amino-acid polypeptide reads, in one-letter code: Serine/threonine-protein kinase Sgk2 (367 aa).

The interval 1-28 (MASSPVGVPSPQPSRANGNINLGPSANP) is disordered. Ser10 carries the post-translational modification Phosphoserine. Residues 15-28 (RANGNINLGPSANP) are compositionally biased toward polar residues. One can recognise a Protein kinase domain in the interval 35 to 292 (FDFLKVIGKG…FLDIKNHMFF (258 aa)). Residues 41-49 (IGKGNYGKV) and Lys64 each bind ATP. Residues 68 to 78 (KKSILKNKEQN) carry the Nuclear localization signal motif. The Proton acceptor role is filled by Asp159. Thr193 is modified (phosphothreonine; by PDPK1). One can recognise an AGC-kinase C-terminal domain in the interval 293 to 367 (SPINWDDLYH…AQDDDDILDS (75 aa)). Residues Ser334 and Ser356 each carry the phosphoserine modification. Tyr357 is subject to Phosphotyrosine.

It belongs to the protein kinase superfamily. AGC Ser/Thr protein kinase family. Activated by phosphorylation on Ser-356 by an unknown kinase (may be mTORC2 but not confirmed), transforming it into a substrate for PDPK1 which then phosphorylates it on Thr-193.

Its subcellular location is the cytoplasm. The protein resides in the nucleus. The catalysed reaction is L-seryl-[protein] + ATP = O-phospho-L-seryl-[protein] + ADP + H(+). It catalyses the reaction L-threonyl-[protein] + ATP = O-phospho-L-threonyl-[protein] + ADP + H(+). Its activity is regulated as follows. Two specific sites, one in the kinase domain (Thr-193) and the other in the C-terminal regulatory region (Ser-356), need to be phosphorylated for its full activation. In terms of biological role, serine/threonine-protein kinase which is involved in the regulation of a wide variety of ion channels, membrane transporters, cell growth, survival and proliferation. Up-regulates Na(+) channels: SCNN1A/ENAC, K(+) channels: KCNA3/Kv1.3, KCNE1 and KCNQ1, amino acid transporter: SLC6A19, glutamate transporter: SLC1A6/EAAT4, glutamate receptors: GRIA1/GLUR1 and GRIK2/GLUR6, Na(+)/H(+) exchanger: SLC9A3/NHE3, and the Na(+)/K(+) ATPase. The protein is Serine/threonine-protein kinase Sgk2 (Sgk2) of Mus musculus (Mouse).